The primary structure comprises 344 residues: Fe-S cluster assembly protein DRE2 (344 aa).

Residues 1–160 form an N-terminal SAM-like domain region; that stretch reads MTSNILLLLH…KKLNNDNAST (160 aa). The interval 154-179 is disordered; the sequence is NNDNASTPGLTDSSAGTSEDETATVS. Over residues 155 to 170 the composition is skewed to polar residues; sequence NDNASTPGLTDSSAGT. The interval 161–223 is linker; that stretch reads PGLTDSSAGT…NDLIAESNKY (63 aa). Positions 231, 243, 246, and 248 each coordinate [2Fe-2S] cluster. The fe-S binding site A stretch occupies residues 231–248; that stretch reads CELPNGKKRKKACKDCTC. [4Fe-4S] cluster-binding residues include Cys313, Cys316, Cys324, and Cys327. 2 consecutive short sequence motifs (cx2C motif) follow at residues 313–316 and 324–327; these read CGSC and CDGC. The segment at 313–327 is fe-S binding site B; it reads CGSCSLGDAFRCDGC.

This sequence belongs to the anamorsin family. In terms of assembly, monomer. Interacts with TAH18. Interacts with MIA40. Requires [2Fe-2S] cluster as cofactor. It depends on [4Fe-4S] cluster as a cofactor.

The protein resides in the cytoplasm. It is found in the mitochondrion intermembrane space. Its function is as follows. Component of the cytosolic iron-sulfur (Fe-S) protein assembly (CIA) machinery required for the maturation of extramitochondrial Fe-S proteins. Part of an electron transfer chain functioning in an early step of cytosolic Fe-S biogenesis, facilitating the de novo assembly of a [4Fe-4S] cluster on the scaffold complex CFD1-NBP35. Electrons are transferred to DRE2 from NADPH via the FAD- and FMN-containing protein TAH18. TAH18-DRE2 are also required for the assembly of the diferric tyrosyl radical cofactor of ribonucleotide reductase (RNR), probably by providing electrons for reduction during radical cofactor maturation in the catalytic small subunit RNR2. The chain is Fe-S cluster assembly protein DRE2 from Candida tropicalis (strain ATCC MYA-3404 / T1) (Yeast).